We begin with the raw amino-acid sequence, 133 residues long: MANHDPISDMLTRIRNASEKRHEKTKVPASRMSLSIAKVLQSEGFIAEINEEGEGFRKQLILGLKYTGKHRSPIIRSMQRVSRPGLRIYKNTRGLPKVLGGLGIAIISTSNGVMSDRDARKQGVGGEVLCYVC.

The tract at residues 1–28 (MANHDPISDMLTRIRNASEKRHEKTKVP) is disordered. The segment covering 16-26 (NASEKRHEKTK) has biased composition (basic and acidic residues).

It belongs to the universal ribosomal protein uS8 family. Part of the 30S ribosomal subunit. Contacts proteins S5 and S12.

In terms of biological role, one of the primary rRNA binding proteins, it binds directly to 16S rRNA central domain where it helps coordinate assembly of the platform of the 30S subunit. This Prochlorococcus marinus (strain NATL1A) protein is Small ribosomal subunit protein uS8.